Here is a 324-residue protein sequence, read N- to C-terminus: Probable metal transport system membrane protein CPn_0346/CP_0414/CPj0346/CpB0353 (324 aa).

10 helical membrane passes run 1 to 21 (MALG…SVFF), 39 to 59 (IQII…TFLV), 64 to 84 (AMYA…VCLF), 94 to 114 (GTLT…IYFI), 125 to 145 (STAL…VFMT), 165 to 185 (EDIF…IFAF), 201 to 221 (LGIP…ACLV), 226 to 246 (AVGV…AKVI), 252 to 272 (SLMA…PASS), and 286 to 306 (SGIS…ISYF).

The protein belongs to the ABC-3 integral membrane protein family.

It is found in the cell inner membrane. Part of an ATP-driven transport system CPn_0346/CPn_0347/CPn_0348/CPn_0349 for a metal. The polypeptide is Probable metal transport system membrane protein CPn_0346/CP_0414/CPj0346/CpB0353 (Chlamydia pneumoniae (Chlamydophila pneumoniae)).